The primary structure comprises 354 residues: Divinyl chlorophyll a/b light-harvesting protein PcbF (354 aa).

Helical transmembrane passes span Phe27–Leu47, Val88–Leu108, Phe140–Ala160, Val201–Ile221, Ala248–Cys268, and Thr315–Leu335.

Belongs to the PsbB/PsbC family. IsiA/Pcb subfamily. As to quaternary structure, the antenna complex consists of divinyl chlorophylls (a and b) and divinyl chlorophyll a/b binding proteins and binds more divinyl chlorophyll b than does the antenna complex from high-light-adapted Prochlorococcus. The cofactor is divinyl chlorophyll a. It depends on divinyl chlorophyll b as a cofactor.

The protein localises to the cellular thylakoid membrane. The antenna complex functions as a light receptor, it captures and delivers excitation energy to photosystems II and I. The Prochlorales pcb genes are not related to higher plant LHCs. The polypeptide is Divinyl chlorophyll a/b light-harvesting protein PcbF (pcbF) (Prochlorococcus marinus (strain SARG / CCMP1375 / SS120)).